A 483-amino-acid chain; its full sequence is Regulatory protein ViaA (483 aa).

It belongs to the ViaA family. As to quaternary structure, homodimer. Interacts with RavA.

It is found in the cytoplasm. Its function is as follows. Component of the RavA-ViaA chaperone complex, which may act on the membrane to optimize the function of some of the respiratory chains. ViaA stimulates the ATPase activity of RavA. The polypeptide is Regulatory protein ViaA (Salmonella choleraesuis (strain SC-B67)).